The sequence spans 417 residues: Serine hydroxymethyltransferase (417 aa).

(6S)-5,6,7,8-tetrahydrofolate contacts are provided by residues L121 and 125-127 (GHL). At K229 the chain carries N6-(pyridoxal phosphate)lysine. 355-357 (SPF) lines the (6S)-5,6,7,8-tetrahydrofolate pocket.

The protein belongs to the SHMT family. Homodimer. Pyridoxal 5'-phosphate is required as a cofactor.

It localises to the cytoplasm. It catalyses the reaction (6R)-5,10-methylene-5,6,7,8-tetrahydrofolate + glycine + H2O = (6S)-5,6,7,8-tetrahydrofolate + L-serine. It functions in the pathway one-carbon metabolism; tetrahydrofolate interconversion. Its pathway is amino-acid biosynthesis; glycine biosynthesis; glycine from L-serine: step 1/1. Functionally, catalyzes the reversible interconversion of serine and glycine with tetrahydrofolate (THF) serving as the one-carbon carrier. This reaction serves as the major source of one-carbon groups required for the biosynthesis of purines, thymidylate, methionine, and other important biomolecules. Also exhibits THF-independent aldolase activity toward beta-hydroxyamino acids, producing glycine and aldehydes, via a retro-aldol mechanism. This chain is Serine hydroxymethyltransferase, found in Shewanella denitrificans (strain OS217 / ATCC BAA-1090 / DSM 15013).